The following is a 938-amino-acid chain: ATP-dependent 6-phosphofructokinase subunit beta (938 aa).

Positions 1-552 are N-terminal catalytic PFK domain 1; it reads MTQSLPLLNG…HLDNFMAINS (552 aa). ATP is bound by residues glycine 185, 249–250, and 279–282; these read RC and GDGS. Aspartate 280 provides a ligand contact to Mg(2+). Beta-D-fructose 6-phosphate is bound by residues 325–327, arginine 362, 369–371, glutamate 426, arginine 454, and 460–463; these read SID, MGR, and HVQR. Aspartate 327 functions as the Proton acceptor in the catalytic mechanism. Positions 553–566 are interdomain linker; the sequence is ADHIEPKLPEHTHM. The interval 567–938 is C-terminal regulatory PFK domain 2; sequence KIAIVNVGAP…ADHLVGRKKL (372 aa). Beta-D-fructose 2,6-bisphosphate contacts are provided by residues arginine 637, 695–699, arginine 733, 740–742, lysine 826, 832–835, and arginine 915; these read TLSNN, QGG, and HVQQ.

This sequence belongs to the phosphofructokinase type A (PFKA) family. ATP-dependent PFK group I subfamily. Eukaryotic two domain clade 'E' sub-subfamily. In terms of assembly, heterooctamer of 4 alpha and 4 beta chains. It depends on Mg(2+) as a cofactor.

It localises to the cytoplasm. The catalysed reaction is beta-D-fructose 6-phosphate + ATP = beta-D-fructose 1,6-bisphosphate + ADP + H(+). It participates in carbohydrate degradation; glycolysis; D-glyceraldehyde 3-phosphate and glycerone phosphate from D-glucose: step 3/4. Allosterically activated by ADP, AMP, or fructose 2,6-bisphosphate, and allosterically inhibited by ATP or citrate. Functionally, catalyzes the phosphorylation of D-fructose 6-phosphate to fructose 1,6-bisphosphate by ATP, the first committing step of glycolysis. The polypeptide is ATP-dependent 6-phosphofructokinase subunit beta (PFK2) (Kluyveromyces lactis (strain ATCC 8585 / CBS 2359 / DSM 70799 / NBRC 1267 / NRRL Y-1140 / WM37) (Yeast)).